The following is an 826-amino-acid chain: Disintegrin and metalloproteinase domain-containing protein 8 (826 aa).

A signal peptide spans 1-16 (MLGLWLLSVLWTPAVA). The Extracellular segment spans residues 17–658 (PGPPLPHVKQ…VSDEQAASTS (642 aa)). N-linked (GlcNAc...) asparagine glycans are attached at residues asparagine 89 and asparagine 260. The 200-residue stretch at 196–395 (RYVELYVVAD…PQTGCLTNVP (200 aa)) folds into the Peptidase M12B domain. Cystine bridges form between cysteine 305–cysteine 390, cysteine 346–cysteine 374, cysteine 348–cysteine 357, cysteine 430–cysteine 452, cysteine 443–cysteine 449, cysteine 461–cysteine 481, cysteine 468–cysteine 498, cysteine 493–cysteine 503, cysteine 563–cysteine 615, cysteine 615–cysteine 625, cysteine 619–cysteine 631, and cysteine 633–cysteine 642. A Zn(2+)-binding site is contributed by histidine 329. Glutamate 330 is a catalytic residue. Zn(2+) is bound by residues histidine 333 and histidine 339. In terms of domain architecture, Disintegrin spans 403–489 (GPVCGNLFVE…TCPEDAFQQN (87 aa)). An N-linked (GlcNAc...) asparagine glycan is attached at asparagine 431. An EGF-like domain is found at 611–643 (RSENCSAKCNNHGVCNHKRECHCHKGWAPPNCV). Asparagine 614 carries an N-linked (GlcNAc...) asparagine glycan. The helical transmembrane segment at 659–683 (LPVSVVVVLVILVAAMVIVAGIVIY) threads the bilayer. Residues 684 to 826 (RKAPRQIQRR…VALKVPIQKR (143 aa)) lie on the Cytoplasmic side of the membrane. A disordered region spans residues 701-826 (SGLSNPLFYT…VALKVPIQKR (126 aa)). Pro residues predominate over residues 733-748 (PPRPIVKPKRPPPAPP). Positions 749–763 (GAVSSSPLPVPVYAP) are enriched in low complexity.

As to quaternary structure, interacts with FST3. It depends on Zn(2+) as a cofactor. As to expression, macrophages.

Its subcellular location is the membrane. Possible involvement in extravasation of leukocytes. In Mus musculus (Mouse), this protein is Disintegrin and metalloproteinase domain-containing protein 8 (Adam8).